We begin with the raw amino-acid sequence, 140 residues long: Putative pre-16S rRNA nuclease (140 aa).

It belongs to the YqgF nuclease family.

The protein localises to the cytoplasm. Its function is as follows. Could be a nuclease involved in processing of the 5'-end of pre-16S rRNA. This is Putative pre-16S rRNA nuclease from Serratia proteamaculans (strain 568).